Consider the following 524-residue polypeptide: Inosine-5'-monophosphate dehydrogenase (524 aa).

CBS domains lie at 121–180 and 184–242; these read FILD…NTPV and MTPR…PLAS. Residues 280–282 and 330–332 contribute to the NAD(+) site; these read DSS and GMG. Residues Gly332 and Gly334 each contribute to the K(+) site. Residue Ser335 coordinates IMP. Cys337 serves as a coordination point for K(+). Catalysis depends on Cys337, which acts as the Thioimidate intermediate. Residues 370 to 372, 393 to 394, and 417 to 421 contribute to the IMP site; these read DGG, GG, and YRGMG. Arg439 functions as the Proton acceptor in the catalytic mechanism. Gln451 is an IMP binding site. K(+) is bound by residues Glu510 and Gly511.

Belongs to the IMPDH/GMPR family. Homotetramer. It depends on K(+) as a cofactor.

It is found in the cytoplasm. It carries out the reaction IMP + NAD(+) + H2O = XMP + NADH + H(+). Its pathway is purine metabolism; XMP biosynthesis via de novo pathway; XMP from IMP: step 1/1. Its activity is regulated as follows. Mycophenolic acid (MPA) is a non-competitive inhibitor that prevents formation of the closed enzyme conformation by binding to the same site as the amobile flap. In contrast, mizoribine monophosphate (MZP) is a competitive inhibitor that induces the closed conformation. MPA is a potent inhibitor of mammalian IMPDHs but a poor inhibitor of the bacterial enzymes. MZP is a more potent inhibitor of bacterial IMPDH. In terms of biological role, catalyzes the conversion of inosine 5'-phosphate (IMP) to xanthosine 5'-phosphate (XMP), the first committed and rate-limiting step in the de novo synthesis of guanine nucleotides, and therefore plays an important role in the regulation of cell growth. This is Inosine-5'-monophosphate dehydrogenase (gua1) from Schizosaccharomyces pombe (strain 972 / ATCC 24843) (Fission yeast).